The chain runs to 214 residues: MTMYIGLILVVLATFCQGEVVRECTFKAYLNDYLSDRTYGLLPCRYFEHGVLPKETLVVDISPNDTQGLWDECGKSDEYPCRFRDKLYWKKAYYWREKHGRSPHVPYPYCDDNEGVKPCYYYNKLMRFDQSRSVNFRSDHVWPVCDDINTDFIDEMPKPCQYNNRLYWGAKQYRMHTGKTRKPPRITNIFIRRRQGINGRLSTKPRRFKQWNLN.

An N-terminal signal peptide occupies residues 1–18 (MTMYIGLILVVLATFCQG). The N-linked (GlcNAc...) asparagine; by host glycan is linked to Asn64.

This is an uncharacterized protein from Magallana gigas (Pacific oyster).